Reading from the N-terminus, the 886-residue chain is cytokinesis protein 3 (886 aa).

Residues 6-67 form the SH3 domain; the sequence is QLPCMVRALY…PSNFVHCLDI (62 aa). The segment covering 72-88 has biased composition (low complexity); it reads PGSSMSRTSASSFRYSS. A disordered region spans residues 72-189; the sequence is PGSSMSRTSA…DLSRSTPSPL (118 aa). Residues 89–104 are compositionally biased toward polar residues; sequence PQKSSIDTPITSSDQG. Positions 135-154 are enriched in low complexity; it reads LNSLGSSLSLKKSVSRPPSS. Positions 155-188 are enriched in polar residues; sequence MSRTNLDVSSRWDNTADNDSQIDAQDLSRSTPSP. Residue Ser213 is modified to Phosphoserine. 2 disordered regions span residues 219–290 and 358–393; these read TKST…SPSD and RRGS…SPHT. Residues 253–264 show a composition bias toward polar residues; sequence DNSSKPRTSLQP.

It belongs to the CYK3 family.

It is found in the cell tip. Involved in cytokinesis. The sequence is that of cytokinesis protein 3 (cyk3) from Schizosaccharomyces pombe (strain 972 / ATCC 24843) (Fission yeast).